Here is a 495-residue protein sequence, read N- to C-terminus: Ectonucleoside triphosphate diphosphohydrolase 2 (495 aa).

Residues 1-4 (MAGK) are Cytoplasmic-facing. The helical transmembrane segment at 5–25 (LVSLVPPLLLAAAGLTGLLLL) threads the bilayer. Residues 26–462 (CVPTQDVREP…PGLRKGTHFS (437 aa)) lie on the Extracellular side of the membrane. The N-linked (GlcNAc...) asparagine glycan is linked to asparagine 64. An intrachain disulfide couples cysteine 75 to cysteine 99. N-linked (GlcNAc...) asparagine glycosylation is present at asparagine 129. Glutamate 165 serves as the catalytic Proton acceptor. Residue 204–208 (GASTQ) coordinates ATP. 2 disulfide bridges follow: cysteine 242/cysteine 284 and cysteine 265/cysteine 310. Asparagine 294, asparagine 306, and asparagine 319 each carry an N-linked (GlcNAc...) asparagine glycan. Cystine bridges form between cysteine 323–cysteine 328 and cysteine 377–cysteine 399. Asparagine 378 and asparagine 443 each carry an N-linked (GlcNAc...) asparagine glycan. A helical membrane pass occupies residues 463–483 (SWVALLLLFTVLILAALVLLL). Topologically, residues 484-495 (RQVRSAKSPGAL) are cytoplasmic.

This sequence belongs to the GDA1/CD39 NTPase family. Requires Ca(2+) as cofactor. Mg(2+) is required as a cofactor. Expressed in brain, heart, vas deferens, kidney, skeletal muscle, thymus, lung and spleen. Weak expression in liver.

It is found in the cell membrane. Functionally, in the nervous system, could hydrolyze ATP and other nucleotides to regulate purinergic neurotransmission. Hydrolyzes ADP only to a marginal extent. This chain is Ectonucleoside triphosphate diphosphohydrolase 2 (Entpd2), found in Rattus norvegicus (Rat).